We begin with the raw amino-acid sequence, 267 residues long: Thiamine thiazole synthase (267 aa).

NAD(+) is bound by residues Ser-41, 60-61, Gly-68, Val-132, and 160-162; these read ER and HVD. 2 residues coordinate Fe cation: Asp-162 and His-177. An NAD(+)-binding site is contributed by Met-227. Arg-237 provides a ligand contact to glycine.

Belongs to the THI4 family. As to quaternary structure, homooctamer; tetramer of dimers. Fe(2+) serves as cofactor.

It catalyses the reaction hydrogen sulfide + glycine + NAD(+) = ADP-5-ethyl-4-methylthiazole-2-carboxylate + nicotinamide + 3 H2O + H(+). The protein operates within cofactor biosynthesis; thiamine diphosphate biosynthesis. In terms of biological role, involved in the biosynthesis of the thiazole moiety of thiamine. Catalyzes the conversion of NAD and glycine to adenosine diphosphate 5-(2-hydroxyethyl)-4-methylthiazole-2-carboxylate (ADT), an adenylated thiazole intermediate, using free sulfide as a source of sulfur. In Saccharolobus islandicus (strain L.S.2.15 / Lassen #1) (Sulfolobus islandicus), this protein is Thiamine thiazole synthase.